Reading from the N-terminus, the 105-residue chain is Urease subunit gamma (105 aa).

The protein belongs to the urease gamma subunit family. Heterotrimer of UreA (gamma), UreB (beta) and UreC (alpha) subunits. Three heterotrimers associate to form the active enzyme.

Its subcellular location is the cytoplasm. It catalyses the reaction urea + 2 H2O + H(+) = hydrogencarbonate + 2 NH4(+). Its pathway is nitrogen metabolism; urea degradation; CO(2) and NH(3) from urea (urease route): step 1/1. This is Urease subunit gamma from Bacillus subtilis (strain 168).